Consider the following 91-residue polypeptide: Cell division protein FtsB (91 aa).

The Cytoplasmic portion of the chain corresponds to 1–3; sequence MRW. A helical transmembrane segment spans residues 4–21; sequence PLIVLAVLVIVLQYPLWL. Over 22-91 the chain is Periplasmic; it reads GKGGWLRVWD…EIFVHTPRKP (70 aa). Positions 28–74 form a coiled coil; it reads RVWDVDRQLQAQRETNQRLEQRNAGLEAEVRDLKSGNEAVEERARFE.

The protein belongs to the FtsB family. In terms of assembly, part of a complex composed of FtsB, FtsL and FtsQ.

The protein resides in the cell inner membrane. In terms of biological role, essential cell division protein. May link together the upstream cell division proteins, which are predominantly cytoplasmic, with the downstream cell division proteins, which are predominantly periplasmic. The chain is Cell division protein FtsB from Aromatoleum aromaticum (strain DSM 19018 / LMG 30748 / EbN1) (Azoarcus sp. (strain EbN1)).